We begin with the raw amino-acid sequence, 717 residues long: ATP-dependent zinc metalloprotease FtsH (717 aa).

At 1 to 9 the chain is on the cytoplasmic side; sequence MKNASRIFK. A helical transmembrane segment spans residues 10 to 30; that stretch reads GPLIWILLCIGLIIVFLQFAG. Topologically, residues 31–111 are extracellular; it reads SGNGYKDIPT…SWQGENPGQS (81 aa). A helical membrane pass occupies residues 112-132; it reads IWKALLINFLPFVIILLFFLW. The Cytoplasmic portion of the chain corresponds to 133-717; the sequence is AMNAAQGMGG…NGNPWGPPRS (585 aa). 207-214 is an ATP binding site; the sequence is GPPGTGKT. A Zn(2+)-binding site is contributed by H429. E430 is a catalytic residue. Zn(2+)-binding residues include H433 and D505. A disordered region spans residues 617–717; it reads AFTGSDKRVP…NGNPWGPPRS (101 aa). Residues 691–717 show a composition bias toward pro residues; that stretch reads PEPPSPTHPGEGPQPPSNGNPWGPPRS.

It in the central section; belongs to the AAA ATPase family. This sequence in the C-terminal section; belongs to the peptidase M41 family. In terms of assembly, homohexamer. It depends on Zn(2+) as a cofactor.

Its subcellular location is the cell membrane. In terms of biological role, acts as a processive, ATP-dependent zinc metallopeptidase for both cytoplasmic and membrane proteins. Plays a role in the quality control of integral membrane proteins. The sequence is that of ATP-dependent zinc metalloprotease FtsH from Cutibacterium acnes (strain SK137) (Propionibacterium acnes).